Reading from the N-terminus, the 331-residue chain is Biotin synthase (331 aa).

Residues 40–269 (YRVQLASLLS…HARVRLSAGR (230 aa)) form the Radical SAM core domain. [4Fe-4S] cluster contacts are provided by Cys-55, Cys-59, and Cys-62. Cys-100, Cys-132, Cys-192, and Arg-264 together coordinate [2Fe-2S] cluster.

Belongs to the radical SAM superfamily. Biotin synthase family. Homodimer. Requires [4Fe-4S] cluster as cofactor. [2Fe-2S] cluster is required as a cofactor.

The enzyme catalyses (4R,5S)-dethiobiotin + (sulfur carrier)-SH + 2 reduced [2Fe-2S]-[ferredoxin] + 2 S-adenosyl-L-methionine = (sulfur carrier)-H + biotin + 2 5'-deoxyadenosine + 2 L-methionine + 2 oxidized [2Fe-2S]-[ferredoxin]. It functions in the pathway cofactor biosynthesis; biotin biosynthesis; biotin from 7,8-diaminononanoate: step 2/2. In terms of biological role, catalyzes the conversion of dethiobiotin (DTB) to biotin by the insertion of a sulfur atom into dethiobiotin via a radical-based mechanism. The chain is Biotin synthase from Synechococcus sp. (strain CC9605).